Consider the following 106-residue polypeptide: Putative membrane protein insertion efficiency factor (106 aa).

This sequence belongs to the UPF0161 family.

The protein resides in the cell inner membrane. Functionally, could be involved in insertion of integral membrane proteins into the membrane. The protein is Putative membrane protein insertion efficiency factor of Methylacidiphilum infernorum (isolate V4) (Methylokorus infernorum (strain V4)).